A 434-amino-acid polypeptide reads, in one-letter code: Xylose isomerase (434 aa).

Active-site residues include histidine 100 and aspartate 103. The Mg(2+) site is built by glutamate 231, glutamate 267, histidine 270, aspartate 295, aspartate 306, aspartate 308, and aspartate 338.

The protein belongs to the xylose isomerase family. Homotetramer. Mg(2+) is required as a cofactor.

The protein localises to the cytoplasm. The catalysed reaction is alpha-D-xylose = alpha-D-xylulofuranose. The polypeptide is Xylose isomerase (Ruegeria pomeroyi (strain ATCC 700808 / DSM 15171 / DSS-3) (Silicibacter pomeroyi)).